The sequence spans 189 residues: MKEQQKETEQNIEEINDETVTEQIETDVDTLEKEAEVDPQQVEIEQLQSDVKELEDKLLRAQAEIQNIQQRHARELQTVRKYDGQKLAGAVLPAVDNLERALQVESEDAVTQQIKTGVEMTLGTLVQALRDNGISATGEVGETFDPTKHQAIQSVASDDVASDQIATVLQKGYMIQDRVLRPAMVAVAK.

Residues 1 to 22 form a disordered region; it reads MKEQQKETEQNIEEINDETVTE. Over residues 10 to 22 the composition is skewed to acidic residues; the sequence is QNIEEINDETVTE.

This sequence belongs to the GrpE family. In terms of assembly, homodimer.

It localises to the cytoplasm. Functionally, participates actively in the response to hyperosmotic and heat shock by preventing the aggregation of stress-denatured proteins, in association with DnaK and GrpE. It is the nucleotide exchange factor for DnaK and may function as a thermosensor. Unfolded proteins bind initially to DnaJ; upon interaction with the DnaJ-bound protein, DnaK hydrolyzes its bound ATP, resulting in the formation of a stable complex. GrpE releases ADP from DnaK; ATP binding to DnaK triggers the release of the substrate protein, thus completing the reaction cycle. Several rounds of ATP-dependent interactions between DnaJ, DnaK and GrpE are required for fully efficient folding. The chain is Protein GrpE from Leuconostoc citreum (strain KM20).